The primary structure comprises 213 residues: Holliday junction resolvase RecU (213 aa).

Positions 99, 101, 114, and 133 each coordinate Mg(2+).

The protein belongs to the RecU family. The cofactor is Mg(2+).

It localises to the cytoplasm. The enzyme catalyses Endonucleolytic cleavage at a junction such as a reciprocal single-stranded crossover between two homologous DNA duplexes (Holliday junction).. Endonuclease that resolves Holliday junction intermediates in genetic recombination. Cleaves mobile four-strand junctions by introducing symmetrical nicks in paired strands. Promotes annealing of linear ssDNA with homologous dsDNA. Required for DNA repair, homologous recombination and chromosome segregation. The polypeptide is Holliday junction resolvase RecU (Lactococcus lactis subsp. cremoris (strain SK11)).